We begin with the raw amino-acid sequence, 448 residues long: Fibulin-5 (448 aa).

The N-terminal stretch at 1 to 23 (MPGFKRILTVTVLALCLPTPGNA) is a signal peptide. The 41-residue stretch at 42 to 82 (DVDECRTIPEACRGDMMCVNQNGGYLCIPRTNPVYRGPYSN) folds into the EGF-like 1; calcium-binding domain. 17 disulfide bridges follow: cysteine 46-cysteine 59, cysteine 53-cysteine 68, cysteine 131-cysteine 144, cysteine 138-cysteine 153, cysteine 155-cysteine 166, cysteine 172-cysteine 181, cysteine 177-cysteine 190, cysteine 192-cysteine 205, cysteine 211-cysteine 221, cysteine 217-cysteine 230, cysteine 232-cysteine 245, cysteine 251-cysteine 262, cysteine 258-cysteine 271, cysteine 273-cysteine 286, cysteine 292-cysteine 305, cysteine 299-cysteine 314, and cysteine 320-cysteine 332. Residues 54–56 (RGD) carry the Cell attachment site motif. The region spanning 127 to 167 (DVDECATDSHQCNPTQICINTEGGYTCSCTDGYWLLEGQCL) is the EGF-like 2; calcium-binding domain. The EGF-like 3; calcium-binding domain maps to 168–206 (DIDECRYGYCQQLCANVPGSYSCTCNPGFTLNEDGRSCQ). The EGF-like 4; calcium-binding domain maps to 207–246 (DVNECATENPCVQTCVNTYGSFICRCDPGYELEDDGVHCS). Residues 245–448 (CSDMDECSFS…LRIYVSQYPF (204 aa)) are interaction with LOXL1. The 41-residue stretch at 247–287 (DMDECSFSEFLCQHECVNQPGTYFCSCPAGYILLDDNRSCQ) folds into the EGF-like 5; calcium-binding domain. N-linked (GlcNAc...) asparagine glycosylation is found at asparagine 283 and asparagine 296. Residues 288 to 333 (DINECEHRNHTCILQQTCYNLQGGFKCIDPIRCEEPYLRISDNRCM) form the EGF-like 6; calcium-binding domain.

Belongs to the fibulin family. As to quaternary structure, homodimer. Monomer, homodimerizes in presence of Ca(2+). Interacts with ELN. Interacts (via N-terminus) with the integrins ITGAV/ITGB3, ITGAV/ITGB5 and ITGA9/ITGB1. Interacts with FBN1 (via N-terminal domain). Forms a ternary complex with ELN and FBN1. Interacts with EFEMP2 with moderate affinity. Interacts with LOXL1. In terms of processing, N-glycosylated.

The protein resides in the secreted. Its subcellular location is the extracellular space. The protein localises to the extracellular matrix. Its function is as follows. Essential for elastic fiber formation, is involved in the assembly of continuous elastin (ELN) polymer and promotes the interaction of microfibrils and ELN. Stabilizes and organizes elastic fibers in the skin, lung and vasculature. Promotes adhesion of endothelial cells through interaction of integrins and the RGD motif. Vascular ligand for integrin receptors which may play a role in vascular development and remodeling. May act as an adapter that mediates the interaction between FBN1 and ELN. The sequence is that of Fibulin-5 (FBLN5) from Bos taurus (Bovine).